The primary structure comprises 133 residues: MEQTLVLIKGDGVRRRLIGEIIRRLENKGLAIRDLKMMRVSRELAEEHYAEHREKPFFGELVEFITSAPVVAMRVEGEGAIGVVRNLMGATDPAKAAPGTIRGDLALSMPDNLVHGSDSPQSAARELRLFFGG.

Residues K9, F57, R85, T91, R102, and N112 each coordinate ATP. H115 functions as the Pros-phosphohistidine intermediate in the catalytic mechanism.

This sequence belongs to the NDK family. As to quaternary structure, homotetramer. Requires Mg(2+) as cofactor.

The protein resides in the cytoplasm. It carries out the reaction a 2'-deoxyribonucleoside 5'-diphosphate + ATP = a 2'-deoxyribonucleoside 5'-triphosphate + ADP. It catalyses the reaction a ribonucleoside 5'-diphosphate + ATP = a ribonucleoside 5'-triphosphate + ADP. Major role in the synthesis of nucleoside triphosphates other than ATP. The ATP gamma phosphate is transferred to the NDP beta phosphate via a ping-pong mechanism, using a phosphorylated active-site intermediate. This is Nucleoside diphosphate kinase from Rubrobacter xylanophilus (strain DSM 9941 / JCM 11954 / NBRC 16129 / PRD-1).